The following is a 655-amino-acid chain: ATP-dependent RNA helicase mss116, mitochondrial (655 aa).

Residues Met-1–Phe-56 constitute a mitochondrion transit peptide. A Q motif motif is present at residues Asp-84–Ser-113. In terms of domain architecture, Helicase ATP-binding spans Leu-116 to Phe-307. Residue Ala-129–Thr-136 coordinates ATP. Positions Asp-251–Asp-254 match the DEAD box motif. A Helicase C-terminal domain is found at Glu-341–Thr-503. A disordered region spans residues Tyr-594–Asp-642. Basic and acidic residues-rich tracts occupy residues Pro-605–Met-614 and Arg-621–Asp-642.

It belongs to the DEAD box helicase family. DDX18/HAS1 subfamily.

The protein localises to the mitochondrion matrix. It carries out the reaction ATP + H2O = ADP + phosphate + H(+). Functionally, ATP-dependent RNA helicase required for mitochondrial splicing of group I and II introns. Also required for efficient mitochondrial translation. This is ATP-dependent RNA helicase mss116, mitochondrial (mss116) from Aspergillus fumigatus (strain ATCC MYA-4609 / CBS 101355 / FGSC A1100 / Af293) (Neosartorya fumigata).